The sequence spans 456 residues: Kynurenine 3-monooxygenase (456 aa).

Belongs to the aromatic-ring hydroxylase family. KMO subfamily. FAD is required as a cofactor.

It catalyses the reaction L-kynurenine + NADPH + O2 + H(+) = 3-hydroxy-L-kynurenine + NADP(+) + H2O. The protein operates within cofactor biosynthesis; NAD(+) biosynthesis; quinolinate from L-kynurenine: step 1/3. Its function is as follows. Catalyzes the hydroxylation of L-kynurenine (L-Kyn) to form 3-hydroxy-L-kynurenine (L-3OHKyn). Required for synthesis of quinolinic acid. This is Kynurenine 3-monooxygenase from Xanthomonas campestris pv. campestris (strain B100).